Consider the following 885-residue polypeptide: DNA mismatch repair protein MutS (885 aa).

626 to 633 (GPNMGGKS) contacts ATP.

Belongs to the DNA mismatch repair MutS family.

This protein is involved in the repair of mismatches in DNA. It is possible that it carries out the mismatch recognition step. This protein has a weak ATPase activity. The protein is DNA mismatch repair protein MutS of Burkholderia cenocepacia (strain HI2424).